Here is a 1066-residue protein sequence, read N- to C-terminus: Kinesin-like protein Klp61F (1066 aa).

A Kinesin motor domain is found at 19 to 356; that stretch reads NIQVYVRVRP…LEYAHRAKNI (338 aa). 103-110 lines the ATP pocket; it reads GQTGTGKT. The stretch at 362–462 forms a coiled coil; it reads VNQKLTKKTV…KTEENLLNTK (101 aa). A Phosphothreonine modification is found at Thr-520. 4 coiled-coil regions span residues 540–569, 639–738, 808–875, and 889–918; these read DRMQ…QLSQ, LMSK…QIKN, CSML…LITE, and DLVQ…ELVR. Thr-933 bears the Phosphothreonine mark. Ser-949 bears the Phosphoserine mark. Residues 990–1002 are compositionally biased toward polar residues; that stretch reads ELSETETIMNSTP. Disordered stretches follow at residues 990–1009 and 1016–1066; these read ELSE…VDGV and GTTR…ENVA. A compositionally biased stretch (low complexity) spans 1033–1051; that stretch reads GGKRSSSLSRSLTPSKTSP. At Ser-1043 the chain carries Phosphoserine. Thr-1045 bears the Phosphothreonine mark. A phosphoserine mark is found at Ser-1050 and Ser-1054.

This sequence belongs to the TRAFAC class myosin-kinesin ATPase superfamily. Kinesin family. BimC subfamily. In terms of assembly, homotetramer. Consists of two pairs of polypeptides associated by coiled-coil interactions to form two homodimers. The homodimers are linked by lateral interactions between their coiled-coil regions to form a bipolar homotetramer consisting of a central rod with two motor domains projecting from either end. Parallel coiled coils extend from each pair of motor heads, switch to two antiparallel coiled coils in the central region and then back to parallel coiled coils. Interacts with Wee1. In terms of processing, phosphorylation is required for localization to mitotic spindles. Phosphorylation of Thr-933 during mitosis controls association with the spindle apparatus. Phosphorylated in vitro by Wee1.

It is found in the cytoplasm. The protein localises to the cytoskeleton. The protein resides in the spindle. Its subcellular location is the spindle pole. Its function is as follows. Important role in mitotic dividing cells. Microtubule motor required for spindle body separation. Slow plus-end directed microtubule motor capable of cross-linking and sliding apart antiparallel microtubules, thereby pushing apart the associated spindle poles during spindle assembly and function. Forms cross-links between microtubules within interpolar microtubule bundles. Contributes to the length of the metaphase spindle, maintains the prometaphase spindle by antagonizing Ncd, drives anaphase B, and also contributes to normal chromosome congression, kinetochore spacing, and anaphase A rates. Displays microtubule-stimulated ATPase activity. Required for normal fusome organization. Required in non-mitotic cells for transport of secretory proteins from the Golgi complex to the cell surface. The protein is Kinesin-like protein Klp61F of Drosophila melanogaster (Fruit fly).